The primary structure comprises 962 residues: Leucine--tRNA ligase (962 aa).

The 'HIGH' region signature appears at 40-51 (PYPSGAGLHVGH). The tract at residues 548–570 (SRKLSGQHDEPNSNVTPSAVEGS) is disordered. The 'KMSKS' region signature appears at 737–741 (KMSKS). Lysine 740 contributes to the ATP binding site.

The protein belongs to the class-I aminoacyl-tRNA synthetase family.

The protein resides in the cytoplasm. It carries out the reaction tRNA(Leu) + L-leucine + ATP = L-leucyl-tRNA(Leu) + AMP + diphosphate. This is Leucine--tRNA ligase from Christiangramia forsetii (strain DSM 17595 / CGMCC 1.15422 / KT0803) (Gramella forsetii).